Consider the following 414-residue polypeptide: Esterase FrsA (414 aa).

The protein belongs to the FrsA family.

The enzyme catalyses a carboxylic ester + H2O = an alcohol + a carboxylate + H(+). In terms of biological role, catalyzes the hydrolysis of esters. This Escherichia coli O81 (strain ED1a) protein is Esterase FrsA.